Consider the following 394-residue polypeptide: Na(+)/H(+) antiporter NhaA (394 aa).

11 helical membrane-spanning segments follow: residues 11–31 (LEAA…IFAN), 59–79 (LLMW…GMEV), 95–115 (IFPA…YWFI), 125–145 (GWAI…ALLS), 155–175 (FLLA…ALFF), 177–197 (HEMS…LVAM), 203–220 (TGLI…ASVL), 254–274 (ALAP…NAGV), 296–316 (LIIG…LLGI), 328–348 (IFAI…IAGL), and 365–385 (LGIL…LKIT).

Belongs to the NhaA Na(+)/H(+) (TC 2.A.33) antiporter family.

The protein resides in the cell inner membrane. It carries out the reaction Na(+)(in) + 2 H(+)(out) = Na(+)(out) + 2 H(+)(in). Functionally, na(+)/H(+) antiporter that extrudes sodium in exchange for external protons. In Actinobacillus pleuropneumoniae serotype 7 (strain AP76), this protein is Na(+)/H(+) antiporter NhaA.